The chain runs to 177 residues: uncharacterized protein (177 aa).

Belongs to the flavoredoxin family. FMN is required as a cofactor.

This is an uncharacterized protein from Archaeoglobus fulgidus (strain ATCC 49558 / DSM 4304 / JCM 9628 / NBRC 100126 / VC-16).